Here is a 323-residue protein sequence, read N- to C-terminus: tRNA dimethylallyltransferase (323 aa).

12–19 provides a ligand contact to ATP; the sequence is GPTASGKT. Residue 14–19 coordinates substrate; sequence TASGKT. Interaction with substrate tRNA regions lie at residues 37–40 and 161–165; these read DSAL and QRLVR.

This sequence belongs to the IPP transferase family. Monomer. It depends on Mg(2+) as a cofactor.

It carries out the reaction adenosine(37) in tRNA + dimethylallyl diphosphate = N(6)-dimethylallyladenosine(37) in tRNA + diphosphate. In terms of biological role, catalyzes the transfer of a dimethylallyl group onto the adenine at position 37 in tRNAs that read codons beginning with uridine, leading to the formation of N6-(dimethylallyl)adenosine (i(6)A). The chain is tRNA dimethylallyltransferase from Stutzerimonas stutzeri (strain A1501) (Pseudomonas stutzeri).